The sequence spans 341 residues: Uroporphyrinogen decarboxylase (341 aa).

Substrate is bound by residues 26–30 (RQAGR), Asp-75, Tyr-150, Ser-205, and His-318.

It belongs to the uroporphyrinogen decarboxylase family. In terms of assembly, homodimer.

The protein localises to the cytoplasm. It catalyses the reaction uroporphyrinogen III + 4 H(+) = coproporphyrinogen III + 4 CO2. The protein operates within porphyrin-containing compound metabolism; protoporphyrin-IX biosynthesis; coproporphyrinogen-III from 5-aminolevulinate: step 4/4. Catalyzes the decarboxylation of four acetate groups of uroporphyrinogen-III to yield coproporphyrinogen-III. This chain is Uroporphyrinogen decarboxylase, found in Thermus thermophilus (strain ATCC 27634 / DSM 579 / HB8).